The chain runs to 118 residues: Holo-[acyl-carrier-protein] synthase (118 aa).

Residues Asp-8 and Glu-57 each contribute to the Mg(2+) site.

It belongs to the P-Pant transferase superfamily. AcpS family. It depends on Mg(2+) as a cofactor.

Its subcellular location is the cytoplasm. The catalysed reaction is apo-[ACP] + CoA = holo-[ACP] + adenosine 3',5'-bisphosphate + H(+). Functionally, transfers the 4'-phosphopantetheine moiety from coenzyme A to a Ser of acyl-carrier-protein. The protein is Holo-[acyl-carrier-protein] synthase of Acholeplasma laidlawii (strain PG-8A).